Reading from the N-terminus, the 445-residue chain is Exodeoxyribonuclease 7 large subunit (445 aa).

This sequence belongs to the XseA family. Heterooligomer composed of large and small subunits.

The protein localises to the cytoplasm. It carries out the reaction Exonucleolytic cleavage in either 5'- to 3'- or 3'- to 5'-direction to yield nucleoside 5'-phosphates.. Functionally, bidirectionally degrades single-stranded DNA into large acid-insoluble oligonucleotides, which are then degraded further into small acid-soluble oligonucleotides. The chain is Exodeoxyribonuclease 7 large subunit from Xanthomonas oryzae pv. oryzae (strain PXO99A).